A 37-amino-acid chain; its full sequence is Large ribosomal subunit protein bL36c (37 aa).

It belongs to the bacterial ribosomal protein bL36 family.

The protein localises to the plastid. It is found in the chloroplast. This Oltmannsiellopsis viridis (Marine flagellate) protein is Large ribosomal subunit protein bL36c.